Reading from the N-terminus, the 158-residue chain is NAD(P)H-quinone oxidoreductase subunit J, chloroplastic (158 aa).

The protein belongs to the complex I 30 kDa subunit family. In terms of assembly, NDH is composed of at least 16 different subunits, 5 of which are encoded in the nucleus.

It is found in the plastid. It localises to the chloroplast thylakoid membrane. It catalyses the reaction a plastoquinone + NADH + (n+1) H(+)(in) = a plastoquinol + NAD(+) + n H(+)(out). It carries out the reaction a plastoquinone + NADPH + (n+1) H(+)(in) = a plastoquinol + NADP(+) + n H(+)(out). Its function is as follows. NDH shuttles electrons from NAD(P)H:plastoquinone, via FMN and iron-sulfur (Fe-S) centers, to quinones in the photosynthetic chain and possibly in a chloroplast respiratory chain. The immediate electron acceptor for the enzyme in this species is believed to be plastoquinone. Couples the redox reaction to proton translocation, and thus conserves the redox energy in a proton gradient. This Ceratophyllum demersum (Rigid hornwort) protein is NAD(P)H-quinone oxidoreductase subunit J, chloroplastic.